The chain runs to 347 residues: Beta-hexosaminidase (347 aa).

Residues aspartate 64, arginine 72, arginine 138, and 168–169 (KH) each bind substrate. Histidine 181 acts as the Proton donor/acceptor in catalysis. The active-site Nucleophile is aspartate 251.

This sequence belongs to the glycosyl hydrolase 3 family. NagZ subfamily.

It localises to the cytoplasm. It carries out the reaction Hydrolysis of terminal non-reducing N-acetyl-D-hexosamine residues in N-acetyl-beta-D-hexosaminides.. It functions in the pathway cell wall biogenesis; peptidoglycan recycling. Its function is as follows. Plays a role in peptidoglycan recycling by cleaving the terminal beta-1,4-linked N-acetylglucosamine (GlcNAc) from peptide-linked peptidoglycan fragments, giving rise to free GlcNAc, anhydro-N-acetylmuramic acid and anhydro-N-acetylmuramic acid-linked peptides. This chain is Beta-hexosaminidase, found in Thioalkalivibrio sulfidiphilus (strain HL-EbGR7).